Consider the following 150-residue polypeptide: Small ribosomal subunit protein eS19 (150 aa).

It belongs to the eukaryotic ribosomal protein eS19 family. As to quaternary structure, part of the 30S ribosomal subunit.

In terms of biological role, may be involved in maturation of the 30S ribosomal subunit. The polypeptide is Small ribosomal subunit protein eS19 (rps19e) (Pyrococcus abyssi (strain GE5 / Orsay)).